A 325-amino-acid chain; its full sequence is tRNA(Ile)-lysidine synthase (325 aa).

Residue 34–39 coordinates ATP; the sequence is SGGQDS.

The protein belongs to the tRNA(Ile)-lysidine synthase family.

The protein resides in the cytoplasm. It carries out the reaction cytidine(34) in tRNA(Ile2) + L-lysine + ATP = lysidine(34) in tRNA(Ile2) + AMP + diphosphate + H(+). In terms of biological role, ligates lysine onto the cytidine present at position 34 of the AUA codon-specific tRNA(Ile) that contains the anticodon CAU, in an ATP-dependent manner. Cytidine is converted to lysidine, thus changing the amino acid specificity of the tRNA from methionine to isoleucine. This Synechococcus sp. (strain ATCC 27144 / PCC 6301 / SAUG 1402/1) (Anacystis nidulans) protein is tRNA(Ile)-lysidine synthase.